Consider the following 698-residue polypeptide: Serine/alanine racemase (698 aa).

The Cytoplasmic portion of the chain corresponds to 1 to 10 (MKNKGIDQFR). A helical transmembrane segment spans residues 11–31 (VIAAMMVVAIHCLPLHYLWPE). At 32–42 (GDILITLTIFR) the chain is on the extracellular side. The chain crosses the membrane as a helical span at residues 43–63 (VAVPFFFMISGYYVFAELAVA). The Cytoplasmic segment spans residues 64 to 81 (NSYPSRQRVFNFIKKQLK). A helical transmembrane segment spans residues 82 to 102 (VYLLATLMFLPLALYSQTIGF). Topologically, residues 103–121 (DLPVGTLVQVLLVNGILYH) are extracellular. Residues 122–142 (LWYFPALITGSLLLTSLLIHV) form a helical membrane-spanning segment. Residues 143 to 147 (SFKKV) lie on the Cytoplasmic side of the membrane. A helical membrane pass occupies residues 148 to 168 (FWLAAGLYLIGLGGDSWFGLI). Residues 169–183 (QQTPIEPFYTAVFHL) lie on the Extracellular side of the membrane. The chain crosses the membrane as a helical span at residues 184-204 (LDGTRNGIFFTPLFLCLGVLV). At 205–216 (RKQSEKRSLSKT) the chain is on the cytoplasmic side. A helical membrane pass occupies residues 217-237 (ALFFLISLIGLLIESAYLHGF). Over 238–244 (SIPKHDS) the chain is Extracellular. A helical membrane pass occupies residues 245–265 (MYLFLPVVLFFLFPLILRWHP). At 266-274 (HRTWKHPGQ) the chain is on the cytoplasmic side. Residues 275-295 (LSLWLYLLHPYTIAGTHFLSQ) form a helical membrane-spanning segment. Residues 296–301 (KISILQ) are Extracellular-facing. A helical transmembrane segment spans residues 302–322 (NNLINYLVVLILTIGFICLFL). Residues 323–698 (RQKHSWFRHK…IGPRVSARIK (376 aa)) are Cytoplasmic-facing. A racemase region spans residues 332-698 (KQTTPVKRAV…IGPRVSARIK (367 aa)). Catalysis depends on Lys371, which acts as the Proton acceptor. Lys371 is subject to N6-(pyridoxal phosphate)lysine. A substrate-binding site is contributed by Arg465. Catalysis depends on Tyr597, which acts as the Proton acceptor. Met646 provides a ligand contact to substrate.

It in the N-terminal section; belongs to the acyltransferase 3 family. The protein in the C-terminal section; belongs to the alanine racemase family. Homodimer. It depends on pyridoxal 5'-phosphate as a cofactor.

Its subcellular location is the cell membrane. The catalysed reaction is L-alanine = D-alanine. It carries out the reaction L-serine = D-serine. It functions in the pathway amino-acid biosynthesis; D-alanine biosynthesis; D-alanine from L-alanine: step 1/1. In terms of biological role, catalyzes the interconversion of L-serine and D-serine, and L-alanine and D-alanine. L-alanine is racemized at a rate that is 14% of that of L-serine. Together with VanC/VanC1 and VanXYC, required for vancomycin resistance in E.gallinarum strain BM4174. The protein is Serine/alanine racemase of Enterococcus gallinarum.